The following is a 513-amino-acid chain: ATP synthase subunit alpha (513 aa).

Residue 169–176 (GDRQTGKT) coordinates ATP.

The protein belongs to the ATPase alpha/beta chains family. As to quaternary structure, F-type ATPases have 2 components, CF(1) - the catalytic core - and CF(0) - the membrane proton channel. CF(1) has five subunits: alpha(3), beta(3), gamma(1), delta(1), epsilon(1). CF(0) has three main subunits: a(1), b(2) and c(9-12). The alpha and beta chains form an alternating ring which encloses part of the gamma chain. CF(1) is attached to CF(0) by a central stalk formed by the gamma and epsilon chains, while a peripheral stalk is formed by the delta and b chains.

The protein localises to the cell inner membrane. The enzyme catalyses ATP + H2O + 4 H(+)(in) = ADP + phosphate + 5 H(+)(out). In terms of biological role, produces ATP from ADP in the presence of a proton gradient across the membrane. The alpha chain is a regulatory subunit. The chain is ATP synthase subunit alpha from Haemophilus influenzae (strain PittGG).